The following is a 275-amino-acid chain: Large ribosomal subunit protein uL2 (275 aa).

The disordered stretch occupies residues 225-275; that stretch reads MNPVDHPHGGGEGRSPIGRPPVTPWGKPALGTRTRNKKKASSKLIVKRRTK. A compositionally biased stretch (basic residues) spans 258 to 275; sequence TRNKKKASSKLIVKRRTK.

This sequence belongs to the universal ribosomal protein uL2 family. Part of the 50S ribosomal subunit. Forms a bridge to the 30S subunit in the 70S ribosome.

In terms of biological role, one of the primary rRNA binding proteins. Required for association of the 30S and 50S subunits to form the 70S ribosome, for tRNA binding and peptide bond formation. It has been suggested to have peptidyltransferase activity; this is somewhat controversial. Makes several contacts with the 16S rRNA in the 70S ribosome. This chain is Large ribosomal subunit protein uL2, found in Desulforudis audaxviator (strain MP104C).